We begin with the raw amino-acid sequence, 337 residues long: Heme A synthase (337 aa).

Helical transmembrane passes span 6 to 26 (ITKWLFISCIMVIAMIVIGGI), 93 to 113 (GRITALIYIVPLIYFYFKDVI), 118 to 138 (ILPYIIALLLFCVQGFMGWYM), 154 to 174 (LAFHLIIAVIIYHILFYQLIK), and 192 to 212 (LIFSGIAITVIYVQIFLGAMV). Residue H256 coordinates heme. 3 consecutive transmembrane segments (helical) span residues 258–278 (LGGYSVFLVVVVLVICLLKIE), 285–305 (IAYFLMIALLMQISTGIITLL), and 308–328 (VPIIIASIHQLFAIILLSIII). H316 provides a ligand contact to heme.

This sequence belongs to the COX15/CtaA family. Type 2 subfamily. As to quaternary structure, interacts with CtaB. Heme b is required as a cofactor.

Its subcellular location is the cell membrane. The catalysed reaction is Fe(II)-heme o + 2 A + H2O = Fe(II)-heme a + 2 AH2. Its pathway is porphyrin-containing compound metabolism; heme A biosynthesis; heme A from heme O: step 1/1. In terms of biological role, catalyzes the conversion of heme O to heme A by two successive hydroxylations of the methyl group at C8. The first hydroxylation forms heme I, the second hydroxylation results in an unstable dihydroxymethyl group, which spontaneously dehydrates, resulting in the formyl group of heme A. The protein is Heme A synthase of Rickettsia felis (strain ATCC VR-1525 / URRWXCal2) (Rickettsia azadi).